Here is a 463-residue protein sequence, read N- to C-terminus: Cysteine--tRNA ligase (463 aa).

C29 is a Zn(2+) binding site. A 'HIGH' region motif is present at residues 31–41 (PTVYDFAHIGN). The Zn(2+) site is built by C227, H252, and E256. The short motif at 285–289 (KMSKS) is the 'KMSKS' region element. K288 serves as a coordination point for ATP.

It belongs to the class-I aminoacyl-tRNA synthetase family. As to quaternary structure, monomer. Zn(2+) serves as cofactor.

It localises to the cytoplasm. The catalysed reaction is tRNA(Cys) + L-cysteine + ATP = L-cysteinyl-tRNA(Cys) + AMP + diphosphate. The chain is Cysteine--tRNA ligase from Rhodopseudomonas palustris (strain ATCC BAA-98 / CGA009).